The chain runs to 198 residues: Heme oxygenase PigA (198 aa).

H26 lines the heme b pocket.

The protein belongs to the heme oxygenase family.

It carries out the reaction heme b + 3 AH2 + 3 O2 + 2 H(+) = biliverdin IXbeta + CO + Fe(2+) + 3 A + 3 H2O. The enzyme catalyses heme b + 3 AH2 + 3 O2 + 3 H(+) = biliverdin IXdelta + CO + Fe(2+) + 3 A + 3 H2O. Its function is as follows. Involved in heme degradation. Catalyzes the degradation of heme to biliverdin, with the release of iron. Forms biliverdin delta (70%) and beta (30%). Under anaerobic conditions ferredoxin--NADP(+) reductase (fpr) can provide the necessary electrons; Bfd is not required. In Pseudomonas aeruginosa (strain ATCC 15692 / DSM 22644 / CIP 104116 / JCM 14847 / LMG 12228 / 1C / PRS 101 / PAO1), this protein is Heme oxygenase PigA.